The primary structure comprises 419 residues: 26S proteasome regulatory subunit 8 homolog B (419 aa).

202 to 209 (GPPGTGKT) provides a ligand contact to ATP. Residue Lys406 forms a Glycyl lysine isopeptide (Lys-Gly) (interchain with G-Cter in ubiquitin) linkage.

Belongs to the AAA ATPase family. In terms of assembly, component of the 19S regulatory particle (RP/PA700) base subcomplex of the 26S proteasome. The 26S proteasome is composed of a core protease (CP), known as the 20S proteasome, capped at one or both ends by the 19S regulatory particle (RP/PA700). The RP/PA700 complex is composed of at least 17 different subunits in two subcomplexes, the base and the lid, which form the portions proximal and distal to the 20S proteolytic core, respectively.

It is found in the cytoplasm. It localises to the nucleus. The 26S proteasome is involved in the ATP-dependent degradation of ubiquitinated proteins. The regulatory (or ATPase) complex confers ATP dependency and substrate specificity to the 26S complex. This chain is 26S proteasome regulatory subunit 8 homolog B (RPT6B), found in Arabidopsis thaliana (Mouse-ear cress).